The following is a 110-amino-acid chain: Endoribonuclease SymE (110 aa).

The 46-residue stretch at 29-74 (SRYPDYTRIPALTMKGQWLEAAGFATGTEVDVRVMNGCIVLTAQQP) folds into the SpoVT-AbrB domain.

It belongs to the SymE family.

The protein resides in the cytoplasm. Involved in the degradation and recycling of damaged RNA. It is itself a target for degradation by the ATP-dependent protease Lon. In Salmonella heidelberg (strain SL476), this protein is Endoribonuclease SymE.